Consider the following 82-residue polypeptide: uncharacterized protein (82 aa).

Positions 22-82 (LRRSRSSRNG…WPPPCAFTPG (61 aa)) are disordered. The span at 47–58 (HRGEPGHPRMEE) shows a compositional bias: basic and acidic residues. Pro residues predominate over residues 73-82 (WPPPCAFTPG).

This is an uncharacterized protein from Homo sapiens (Human).